The sequence spans 114 residues: U-myrmeciitoxin(01)-Mg8a (114 aa).

The first 20 residues, 1–20 (MKLSTLLVAFVLLVITVILS), serve as a signal peptide directing secretion. Residues 21-44 (TPSTNAKALAESNALAVAVSEAEP) constitute a propeptide that is removed on maturation.

Belongs to the formicidae venom precursor-01 superfamily. As to expression, expressed by the venom gland.

It is found in the secreted. May have antimicrobial properties, like most ant linear peptides. This is U-myrmeciitoxin(01)-Mg8a from Myrmecia gulosa (Red bulldog ant).